An 862-amino-acid chain; its full sequence is Leucine--tRNA ligase (862 aa).

The short motif at 42 to 52 is the 'HIGH' region element; that stretch reads PYPSGKIHIGH. The short motif at 614–618 is the 'KMSKS' region element; sequence KMSKS. K617 provides a ligand contact to ATP.

It belongs to the class-I aminoacyl-tRNA synthetase family.

The protein localises to the cytoplasm. The catalysed reaction is tRNA(Leu) + L-leucine + ATP = L-leucyl-tRNA(Leu) + AMP + diphosphate. The protein is Leucine--tRNA ligase of Syntrophus aciditrophicus (strain SB).